The primary structure comprises 150 residues: MKYQQLENLESGWKWKYLVKKHREGELITRYVEASAAKEAVDLLLTLENEPVRVNAWIEEHMNPALLNRMKQTIRARRKRHFNAEHQHTRKKSIDLEFIVWQRLAGLAQRRGKTLSETIVQLIEDAEHKEKYASKMSTLKQDLQALLGKE.

This sequence belongs to the MatP family. Homodimer.

Its subcellular location is the cytoplasm. Functionally, required for spatial organization of the terminus region of the chromosome (Ter macrodomain) during the cell cycle. Prevents early segregation of duplicated Ter macrodomains during cell division. Binds specifically to matS, which is a 13 bp signature motif repeated within the Ter macrodomain. The protein is Macrodomain Ter protein of Citrobacter koseri (strain ATCC BAA-895 / CDC 4225-83 / SGSC4696).